The following is a 200-amino-acid chain: MAKVNPRKRAAAAKDKWKLKDWYIVYAPEFFGNVEIGLTPADEPEKVKGRIIETTLRDVTGDFTKGHVKLYFRIHDVKGQNAYTKFKGHKLARSYIRSLVRRRTTRIDGIFNVTTKDGYKLRVMGMVIAIRRIQSSQERAVREVMEDLIRKKAEELTFTEFVLEAVNGKMGAELAREAKKIYPLKRAEIRKIKVLAEPEA.

It belongs to the eukaryotic ribosomal protein eS1 family.

In Thermococcus sibiricus (strain DSM 12597 / MM 739), this protein is Small ribosomal subunit protein eS1.